The sequence spans 364 residues: Cyclin-D3-2 (364 aa).

The tract at residues 331–364 is disordered; it reads PPGRPIKRGAAAATTADPLPADEESRDAWPPYAA. A compositionally biased stretch (low complexity) spans 340–349; the sequence is AAAATTADPL.

This sequence belongs to the cyclin family. Cyclin D subfamily.

The polypeptide is Cyclin-D3-2 (CYCD3-2) (Oryza sativa subsp. japonica (Rice)).